A 326-amino-acid chain; its full sequence is Malate dehydrogenase (326 aa).

Position 12–18 (G12–A18) interacts with NAD(+). Substrate is bound by residues R93 and R99. NAD(+) contacts are provided by residues N106, Q113, and V130–N132. Substrate contacts are provided by N132 and R163. H188 (proton acceptor) is an active-site residue.

It belongs to the LDH/MDH superfamily. MDH type 2 family.

The catalysed reaction is (S)-malate + NAD(+) = oxaloacetate + NADH + H(+). In terms of biological role, catalyzes the reversible oxidation of malate to oxaloacetate. The polypeptide is Malate dehydrogenase (Chlamydia trachomatis serovar A (strain ATCC VR-571B / DSM 19440 / HAR-13)).